A 414-amino-acid polypeptide reads, in one-letter code: MFRALARASATLGPQVAGWARTMATCQLLVAPPEALLRPLSIPNRLLLGPGPSNLAPRVLVAGGKQMIGHMHKEMFQIMDDIKQGIQYVFQTKNPLTLAISGSGHCALEAALFNILEPGDPFLVGVNGIWGQRAADIGERIGARVHPMIKDPGNHYTLQELEEALAQHKPVLLFLTQGESSSGVLQPLDGYGELCHRYNCLLLVDSVASLCGTPIYMDQQGIDVLYSGSQKVLNSPPGTSLISFSDKAKNKIYTRKTKPVSFYLDMKWLANIWGCDGKPRIYHHTTPVVSLYSLRESLALIAEQGLENSWRQHREVTAYLHGRLQGLGLQLFVKDPALRLPTVTTVAVPAGYDWRDIVNYVMDHFDIEITGGLGPSMGKVLRIGLLGCNATRENVDRVIQALQEALQRCSRNKL.

The transit peptide at 1 to 23 directs the protein to the mitochondrion; the sequence is MFRALARASATLGPQVAGWARTM. The residue at position 231 (Lys-231) is an N6-(pyridoxal phosphate)lysine. An N6-acetyllysine; alternate modification is found at Lys-247. Position 247 is an N6-succinyllysine; alternate (Lys-247). Lys-256 and Lys-334 each carry N6-acetyllysine. Substrate is bound at residue Arg-382. A Microbody targeting signal motif is present at residues 412–414; sequence NKL.

It belongs to the class-V pyridoxal-phosphate-dependent aminotransferase family. As to quaternary structure, homodimer. Requires pyridoxal 5'-phosphate as cofactor.

The protein localises to the peroxisome. It is found in the mitochondrion matrix. The catalysed reaction is L-serine + pyruvate = 3-hydroxypyruvate + L-alanine. It catalyses the reaction glyoxylate + L-alanine = glycine + pyruvate. In terms of biological role, catalyzes the transamination of glyoxylate to glycine and contributes to the glyoxylate detoxification. Catalyzes the transamination between L-serine and pyruvate and contributes to gluconeogenesis from the L-serine metabolism. The protein is Alanine--glyoxylate aminotransferase of Felis catus (Cat).